Consider the following 619-residue polypeptide: Elongation factor 4 (619 aa).

In terms of domain architecture, tr-type G spans 17 to 198; that stretch reads SVIRNFCIIA…RVVRAIPGPE (182 aa). GTP-binding positions include 29–34 and 145–148; these read DHGKST and NKID.

It belongs to the TRAFAC class translation factor GTPase superfamily. Classic translation factor GTPase family. LepA subfamily.

It localises to the cell membrane. The catalysed reaction is GTP + H2O = GDP + phosphate + H(+). Required for accurate and efficient protein synthesis under certain stress conditions. May act as a fidelity factor of the translation reaction, by catalyzing a one-codon backward translocation of tRNAs on improperly translocated ribosomes. Back-translocation proceeds from a post-translocation (POST) complex to a pre-translocation (PRE) complex, thus giving elongation factor G a second chance to translocate the tRNAs correctly. Binds to ribosomes in a GTP-dependent manner. This Micrococcus luteus (strain ATCC 4698 / DSM 20030 / JCM 1464 / CCM 169 / CCUG 5858 / IAM 1056 / NBRC 3333 / NCIMB 9278 / NCTC 2665 / VKM Ac-2230) (Micrococcus lysodeikticus) protein is Elongation factor 4.